The sequence spans 268 residues: 4,5-DOPA dioxygenase extradiol (268 aa).

H15, H53, H175, and H229 together coordinate Zn(2+).

This sequence belongs to the DODA-type extradiol aromatic ring-opening dioxygenase family. As to quaternary structure, monomer. It depends on Zn(2+) as a cofactor.

The protein localises to the cytoplasm. It carries out the reaction L-dopa + O2 = 4-(L-alanin-3-yl)-2-hydroxy-cis,cis-muconate 6-semialdehyde + H(+). It functions in the pathway pigment biosynthesis; betalain biosynthesis. In terms of biological role, opens the cyclic ring of dihydroxy-phenylalanine (DOPA) between carbons 4 and 5, thus producing an unstable seco-DOPA that rearranges nonenzymatically to betalamic acid. Produces mainly (S)-betalamic acid. The chain is 4,5-DOPA dioxygenase extradiol (DODA) from Beta vulgaris (Sugar beet).